A 160-amino-acid polypeptide reads, in one-letter code: Myosin catalytic light chain LC-1, mantle muscle (160 aa).

X1 carries the post-translational modification Blocked amino end (Xaa). EF-hand domains are found at residues 7 to 44 (DEIE…LGMN), 83 to 118 (TAAD…LGER), and 119 to 153 (ITED…VMAG).

In terms of biological role, in molluscan muscle, calcium regulation is associated with myosin rather than with actin. Muscle myosin contains two types of light chains: the catalytic light chain, essential for ATPase activity, and the regulatory light chain, a calcium-binding protein responsible for Ca(2+) dependent binding and Ca(2+) dependent Mg-ATPase activity. The chain is Myosin catalytic light chain LC-1, mantle muscle from Todarodes pacificus (Japanese flying squid).